We begin with the raw amino-acid sequence, 96 residues long: MALSEAEVRHVARLARIALSDEEIALMQAQLSAILDYIAMLQEVDVSNVPPTAQVTGLTTVWRPDVVGEMLTQEQALANAPDQQDGMFRVRAVFDE.

The protein belongs to the GatC family. Heterotrimer of A, B and C subunits.

It carries out the reaction L-glutamyl-tRNA(Gln) + L-glutamine + ATP + H2O = L-glutaminyl-tRNA(Gln) + L-glutamate + ADP + phosphate + H(+). The catalysed reaction is L-aspartyl-tRNA(Asn) + L-glutamine + ATP + H2O = L-asparaginyl-tRNA(Asn) + L-glutamate + ADP + phosphate + 2 H(+). Its function is as follows. Allows the formation of correctly charged Asn-tRNA(Asn) or Gln-tRNA(Gln) through the transamidation of misacylated Asp-tRNA(Asn) or Glu-tRNA(Gln) in organisms which lack either or both of asparaginyl-tRNA or glutaminyl-tRNA synthetases. The reaction takes place in the presence of glutamine and ATP through an activated phospho-Asp-tRNA(Asn) or phospho-Glu-tRNA(Gln). The protein is Aspartyl/glutamyl-tRNA(Asn/Gln) amidotransferase subunit C of Chloroflexus aurantiacus (strain ATCC 29366 / DSM 635 / J-10-fl).